A 720-amino-acid polypeptide reads, in one-letter code: Calpain-12 (720 aa).

A Calpain catalytic domain is found at 45–341 (LFRDPCFPAG…FNTVQICSLS (297 aa)). Catalysis depends on residues cysteine 105, histidine 259, and asparagine 283. Positions 342-541 (PEVLGPSPAG…DDVISADLDA (200 aa)) are domain III. Positions 393–403 (DEEEDDDDEEG) are enriched in acidic residues. Residues 393-415 (DEEEDDDDEEGPWGGWGAAGARG) are disordered. Residues 542-720 (LQAPYKPLEL…KQWSEVATFS (179 aa)) form a domain IV region. Residues 621 to 656 (GHLMSWQATFDKFDEDASGTMNSCELRLALTAAGFH) form the EF-hand domain. Aspartate 634, aspartate 636, serine 638, threonine 640, and glutamate 645 together coordinate Ca(2+).

It belongs to the peptidase C2 family. Expression localized to the cortex of the hair follicle during the anagen phase of hair cycle.

Calcium-regulated non-lysosomal thiol-protease. This Mus musculus (Mouse) protein is Calpain-12 (Capn12).